The sequence spans 2259 residues: Golgin subfamily A member 4 (2259 aa).

Residues 1–54 (MFKKLKQKISEEQQQLQQALAPAQASSSSSTPTRTRSRTSSFTDQLDDATPNRE) form a disordered region. At S10 the chain carries Phosphoserine. The span at 12–41 (EQQQLQQALAPAQASSSSSTPTRTRSRTSS) shows a compositional bias: low complexity. T39 carries the phosphothreonine modification. Phosphoserine is present on residues S41, S104, and S111. Residues 165–235 (SLSREQLLQR…EELQMDQQAK (71 aa)) are interaction with MACF1. The stretch at 167–2182 (SREQLLQRLR…SYEKSVCAAA (2016 aa)) forms a coiled coil. 2 stretches are compositionally biased toward basic and acidic residues: residues 1932-1946 (LEDR…HVIE) and 1954-1977 (DGRH…LSKE). The tract at residues 1932–1977 (LEDRPEENSKSHVIESKLGTPMDGRHSDLESKLAGSEREKQKLSKE) is disordered. One can recognise a GRIP domain in the interval 2199 to 2246 (LFGEPTEFEYLRKVLFEYMMGRETKTMAKVITTVLRFPDDQAQKILER).

As to quaternary structure, homodimer. Interacts with GTP-bound ARL1 and ARL3. Interacts with MACF1. Directly interacts with TBC1D23. Interacts with FAM91A1; this interaction may be mediated by TBC1D23. As to expression, expressed in the head of epididymal sperm but not in testicular sperm (at protein level).

Its subcellular location is the cytoplasm. It is found in the golgi apparatus membrane. It localises to the golgi apparatus. The protein resides in the trans-Golgi network membrane. Functionally, involved in vesicular trafficking at the Golgi apparatus level. May play a role in delivery of transport vesicles containing GPI-linked proteins from the trans-Golgi network through its interaction with MACF1. Involved in endosome-to-Golgi trafficking. This chain is Golgin subfamily A member 4, found in Rattus norvegicus (Rat).